A 512-amino-acid polypeptide reads, in one-letter code: ETS translocation variant 3 (512 aa).

The segment at residues 35–116 (IQLWHFILEL…KGKRFTYKFN (82 aa)) is a DNA-binding region (ETS). The segment at 136-222 (VPQSAPPVPT…NAIGGGGIGH (87 aa)) is disordered. A phosphoserine mark is found at Ser-139, Ser-159, and Ser-315. A compositionally biased stretch (polar residues) spans 158–184 (HSPTNDVQPGRFSASSLTASGQESSNG). The segment at 336-512 (PEESTQFSIK…QGLATAAADA (177 aa)) is disordered. Basic and acidic residues predominate over residues 380 to 406 (IKVEPASEKDPESLRQSAREKEEHTQE). Residue Lys-381 forms a Glycyl lysine isopeptide (Lys-Gly) (interchain with G-Cter in SUMO2) linkage. Lys-388 carries the post-translational modification N6-acetyllysine; alternate. Residue Lys-388 forms a Glycyl lysine isopeptide (Lys-Gly) (interchain with G-Cter in SUMO2); alternate linkage. The span at 443–452 (EPLEVTEDIE) shows a compositional bias: acidic residues. Basic and acidic residues-rich tracts occupy residues 453 to 468 (DRPG…KEDA) and 479 to 491 (RWND…ELSK).

It belongs to the ETS family.

The protein localises to the nucleus. Transcriptional repressor that contribute to growth arrest during terminal macrophage differentiation by repressing target genes involved in Ras-dependent proliferation. Represses MMP1 promoter activity. The chain is ETS translocation variant 3 (ETV3) from Pan troglodytes (Chimpanzee).